We begin with the raw amino-acid sequence, 952 residues long: Alpha-L-rhamnosidase (952 aa).

An N-terminal signal peptide occupies residues Met1–Lys21. Alpha-L-rhamnose contacts are provided by residues Asp520, Arg524–Glu525, Asp532, and Trp594. Glu525 functions as the Proton donor in the catalytic mechanism. Catalysis depends on Glu809, which acts as the Proton acceptor. His826 contributes to the alpha-L-rhamnose binding site.

Belongs to the glycosyl hydrolase 78 family.

It localises to the cell membrane. The enzyme catalyses Hydrolysis of terminal non-reducing alpha-L-rhamnose residues in alpha-L-rhamnosides.. Functionally, alpha-L-rhamnosidase that may be involved in ulvan degradation. Ulvan is the main polysaccharide component of the Ulvales (green seaweed) cell wall. It is composed of disaccharide building blocks comprising 3-sulfated rhamnose (Rha3S) linked to D-glucuronic acid (GlcA), L-iduronic acid (IduA), or D-xylose (Xyl). This Formosa agariphila (strain DSM 15362 / KCTC 12365 / LMG 23005 / KMM 3901 / M-2Alg 35-1) protein is Alpha-L-rhamnosidase.